We begin with the raw amino-acid sequence, 802 residues long: Nuclear polyadenylated RNA-binding protein 3 (802 aa).

Disordered stretches follow at residues 1–174 and 252–293; these read MSDE…RRET and ALSV…RMRF. The span at 22–34 shows a compositional bias: low complexity; the sequence is SNSNENELMNNSS. The span at 37-73 shows a compositional bias: acidic residues; it reads DGIEFDAPEEEREAEREEENEEQHELEDVNDEEEEDK. At T86 the chain carries Phosphothreonine. Composition is skewed to acidic residues over residues 101–139 and 149–158; these read DDDD…EEGN and AAEDGEDEED. A compositionally biased stretch (basic and acidic residues) spans 159–174; that stretch reads KKDKTKDKEVELRRET. Positions 260–276 are enriched in low complexity; that stretch reads STISTTASASATSGARS. Residues 277–293 are compositionally biased toward basic and acidic residues; the sequence is NDQRKPPLSDAQRRMRF. The RRM domain occupies 330 to 401; the sequence is SRLFIGNLPL…KKLILEVSSS (72 aa). T451 carries the phosphothreonine modification. Disordered regions lie at residues 571–675 and 717–802; these read IYGA…PMDQ and MQGQ…KLQK. Pro residues predominate over residues 575 to 590; sequence PPLPVPNGPAVGPPPQ. Low complexity predominate over residues 593-614; that stretch reads YYQGYSMPPPQQQQQQPYGNYG. Residues 632–642 are compositionally biased toward polar residues; that stretch reads MNQSYGRYQTS. Composition is skewed to low complexity over residues 651 to 661 and 717 to 738; these read QIPQGYGRYQA and MQGQ…MNSS. The span at 745–754 shows a compositional bias: polar residues; it reads TNYNGQNISA. Over residues 757-769 the composition is skewed to pro residues; that stretch reads SAPPMSHQPPPPQ. Residues 770–785 show a composition bias toward low complexity; that stretch reads QQQQQQQQQQQQQQQP.

It localises to the nucleus. The protein localises to the nucleoplasm. Functionally, may be required for packaging pre-mRNAs into ribonucleoprotein structures amenable to efficient nuclear RNA processing. Binds to poly(A)+ RNA. Appears to act in the maintenance of CLN3 mRNA levels. The polypeptide is Nuclear polyadenylated RNA-binding protein 3 (NAB3) (Saccharomyces cerevisiae (strain ATCC 204508 / S288c) (Baker's yeast)).